Reading from the N-terminus, the 177-residue chain is Large ribosomal subunit protein uL10 (177 aa).

The protein belongs to the universal ribosomal protein uL10 family. In terms of assembly, part of the ribosomal stalk of the 50S ribosomal subunit. The N-terminus interacts with L11 and the large rRNA to form the base of the stalk. The C-terminus forms an elongated spine to which L12 dimers bind in a sequential fashion forming a multimeric L10(L12)X complex.

Forms part of the ribosomal stalk, playing a central role in the interaction of the ribosome with GTP-bound translation factors. This Thermoanaerobacter sp. (strain X514) protein is Large ribosomal subunit protein uL10.